We begin with the raw amino-acid sequence, 200 residues long: UPF0316 protein SACOL1973 (200 aa).

The next 3 helical transmembrane spans lie at 8 to 28 (PWLM…FLTM), 40 to 60 (IAAS…GLVM), and 66 to 86 (IQNI…GMKI).

This sequence belongs to the UPF0316 family.

The protein localises to the cell membrane. This is UPF0316 protein SACOL1973 from Staphylococcus aureus (strain COL).